Consider the following 168-residue polypeptide: Phosphopantetheine adenylyltransferase (168 aa).

Ser8 provides a ligand contact to substrate. ATP-binding positions include 8 to 9 (SF) and His16. Positions 40, 72, and 86 each coordinate substrate. ATP is bound by residues 87-89 (GLR), Glu97, and 122-128 (YSFLSSS).

The protein belongs to the bacterial CoaD family. Homohexamer. The cofactor is Mg(2+).

The protein localises to the cytoplasm. It catalyses the reaction (R)-4'-phosphopantetheine + ATP + H(+) = 3'-dephospho-CoA + diphosphate. Its pathway is cofactor biosynthesis; coenzyme A biosynthesis; CoA from (R)-pantothenate: step 4/5. Its function is as follows. Reversibly transfers an adenylyl group from ATP to 4'-phosphopantetheine, yielding dephospho-CoA (dPCoA) and pyrophosphate. This chain is Phosphopantetheine adenylyltransferase, found in Thermosynechococcus vestitus (strain NIES-2133 / IAM M-273 / BP-1).